The chain runs to 112 residues: Large ribosomal subunit protein bL17 (112 aa).

The protein belongs to the bacterial ribosomal protein bL17 family. Part of the 50S ribosomal subunit. Contacts protein L32.

The sequence is that of Large ribosomal subunit protein bL17 from Carboxydothermus hydrogenoformans (strain ATCC BAA-161 / DSM 6008 / Z-2901).